A 266-amino-acid chain; its full sequence is Apolipoprotein A-I (266 aa).

Positions 1–18 are cleaved as a signal peptide; sequence MKAVVLTLAVLFLTGSQA. 2 consecutive repeat copies span residues 67-88 and 89-110. The tract at residues 67–266 is 10 X approximate tandem repeats; that stretch reads LKLLDNWDTL…DEATKKLNAQ (200 aa). Methionine 109 carries the post-translational modification Methionine sulfoxide. The 3; half-length repeat unit spans residues 111–121; it reads KDLEEVKQKVQ. 5 tandem repeats follow at residues 122 to 143, 144 to 165, 166 to 187, 188 to 209, and 210 to 231. The stretch at 232 to 242 is one 9; half-length repeat; it reads PALEDLRQGLL. Copy 10 of the repeat occupies 243-266; it reads PVLESFKVGLMAIVDEATKKLNAQ.

It belongs to the apolipoprotein A1/A4/E family. In terms of assembly, homodimer. Interacts with APOA1BP and CLU. Component of a sperm activating protein complex (SPAP), consisting of APOA1, an immunoglobulin heavy chain, an immunoglobulin light chain and albumin. Interacts with NDRG1. Interacts with SCGB3A2. Interacts with NAXE and YJEFN3. Glycosylated. Post-translationally, palmitoylated. In terms of processing, phosphorylation sites are present in the extracellular medium.

It is found in the secreted. In terms of biological role, participates in the reverse transport of cholesterol from tissues to the liver for excretion by promoting cholesterol efflux from tissues and by acting as a cofactor for the lecithin cholesterol acyltransferase (LCAT). As part of the SPAP complex, activates spermatozoa motility. In Acinonyx jubatus (Cheetah), this protein is Apolipoprotein A-I (APOA1).